A 43-amino-acid chain; its full sequence is Cytochrome b559 subunit beta (43 aa).

The chain crosses the membrane as a helical span at residues 18 to 34; it reads WLAIHGLAIPTVFFFGA. Residue H22 coordinates heme.

This sequence belongs to the PsbE/PsbF family. As to quaternary structure, heterodimer of an alpha subunit and a beta subunit. PSII is composed of 1 copy each of membrane proteins PsbA, PsbB, PsbC, PsbD, PsbE, PsbF, PsbH, PsbI, PsbJ, PsbK, PsbL, PsbM, PsbT, PsbY, PsbZ, Psb30/Ycf12, at least 3 peripheral proteins of the oxygen-evolving complex and a large number of cofactors. It forms dimeric complexes. It depends on heme b as a cofactor.

It localises to the plastid. Its subcellular location is the chloroplast thylakoid membrane. This b-type cytochrome is tightly associated with the reaction center of photosystem II (PSII). PSII is a light-driven water:plastoquinone oxidoreductase that uses light energy to abstract electrons from H(2)O, generating O(2) and a proton gradient subsequently used for ATP formation. It consists of a core antenna complex that captures photons, and an electron transfer chain that converts photonic excitation into a charge separation. The sequence is that of Cytochrome b559 subunit beta from Cyanidium caldarium (Red alga).